Reading from the N-terminus, the 1798-residue chain is Non-reducing polyketide synthase nscA (1798 aa).

The N-terminal acylcarrier protein transacylase domain (SAT) stretch occupies residues 25 to 256 (RRLDQHSKDR…PLPVYDGLCH (232 aa)). One can recognise a Ketosynthase family 3 (KS3) domain in the interval 392–825 (SSKLAIVGMA…GGNTTLLLED (434 aa)). The segment at 436-455 (NTHYDPTGKTENTTQTPYGN) is disordered. Over residues 444–453 (KTENTTQTPY) the composition is skewed to polar residues. Active-site for beta-ketoacyl synthase activity residues include C565, H700, and H743. The segment at 931–1230 (FTGQGAYYHG…PSASAMSSCR (300 aa)) is malonyl-CoA:ACP transacylase (MAT) domain. Residues 1322–1458 (HQITAETVEA…AMIRFEDPVA (137 aa)) are N-terminal hotdog fold. One can recognise a PKS/mFAS DH domain in the interval 1322–1632 (HQITAETVEA…FRRVPRLLMD (311 aa)). The active-site Proton acceptor; for dehydratase activity is H1354. The interval 1390–1628 (HMNLTDVEVL…GMIRFRRVPR (239 aa)) is product template (PT) domain. Positions 1486–1632 (ASRLSKPLAY…FRRVPRLLMD (147 aa)) are C-terminal hotdog fold. Residue D1543 is the Proton donor; for dehydratase activity of the active site. The segment at 1685–1719 (MASKAPEPAPLLATSSESSTPKESPIVTPAESERA) is disordered. A compositionally biased stretch (low complexity) spans 1698–1709 (TSSESSTPKESP). Residues 1721–1798 (PVDNNMISQC…EMTAWIEEYC (78 aa)) form the Carrier domain. S1758 bears the O-(pantetheine 4'-phosphoryl)serine mark.

The cofactor is pantetheine 4'-phosphate.

It participates in secondary metabolite biosynthesis. In terms of biological role, non-reducing polyketide synthase; part of the gene cluster that mediates the biosynthesis of neosartoricin B, a prenylated anthracenone that probably exhibits T-cell antiproliferative activity, suggestive of a physiological role as an immunosuppressive agent. The non-reducing polyketide synthase nscA probably synthesizes and cyclizes the decaketide backbone. The hydrolase nscB then mediates the product release through hydrolysis followed by spontaneous decarboxylation. The prenyltransferase nscD catalyzes the addition of the dimethylallyl group to the aromatic C5. The FAD-dependent monooxygenase nscC is then responsible for the stereospecific hydroxylation at C2. Neosartoricin B can be converted into two additional compounds neosartoricins C and D. Neosartoricin C is a spirocyclic compound that is cyclized through the attack of C3 hydroxyl on C14, followed by dehydration. On the other hand, neosartoricin D is a further cyclized compound in which attack of C2 on C14 in neosartoricin C results in the formation of the acetal-containing dioxabicyclo-octanone ring. Both of these compounds are novel and possibly represent related metabolites of the gene cluster. This Arthroderma benhamiae (strain ATCC MYA-4681 / CBS 112371) (Trichophyton mentagrophytes) protein is Non-reducing polyketide synthase nscA.